A 156-amino-acid chain; its full sequence is Small ribosomal subunit protein uS7 (156 aa).

This sequence belongs to the universal ribosomal protein uS7 family. As to quaternary structure, part of the 30S ribosomal subunit. Contacts proteins S9 and S11.

Its function is as follows. One of the primary rRNA binding proteins, it binds directly to 16S rRNA where it nucleates assembly of the head domain of the 30S subunit. Is located at the subunit interface close to the decoding center, probably blocks exit of the E-site tRNA. The polypeptide is Small ribosomal subunit protein uS7 (Rhodospirillum centenum (strain ATCC 51521 / SW)).